The following is an 857-amino-acid chain: Protein dalmatian (857 aa).

Disordered stretches follow at residues 1–50 (MVRT…KLSI) and 146–194 (VQKS…FFHR). Composition is skewed to polar residues over residues 146-156 (VQKSTQPQNIK) and 165-176 (SPCQQRIRSKSP). 4 positions are modified to phosphoserine: serine 173, serine 175, serine 184, and serine 222. A compositionally biased stretch (basic residues) spans 251–271 (GKPRAKRTAKKVRPVGNRRKV). Positions 251–281 (GKPRAKRTAKKVRPVGNRRKVSTKDNEPEPV) are disordered. Serine 405 carries the post-translational modification Phosphoserine. 2 disordered regions span residues 470 to 514 (SICP…NAEN) and 737 to 830 (PPRP…RDIE). A compositionally biased stretch (basic and acidic residues) spans 771-781 (KQPRRTYVKER). Over residues 797–806 (SESEDEDEQD) the composition is skewed to acidic residues. The segment covering 807-816 (SHDKSLDSPE) has biased composition (basic and acidic residues). Positions 817–826 (KKRHHVKRPR) are enriched in basic residues.

It localises to the nucleus. The protein resides in the chromosome. Regulator of sister chromatid cohesion in mitosis. Probably involved in development of the central nervous system. The protein is Protein dalmatian (dmt) of Drosophila melanogaster (Fruit fly).